The sequence spans 254 residues: Glutaredoxin domain-containing cysteine-rich protein 2 (254 aa).

Residues 1 to 16 are compositionally biased toward basic and acidic residues; it reads MEDSEKKLNQKSDDKP. Disordered stretches follow at residues 1 to 20 and 161 to 183; these read MEDS…RKVR and GEND…PLPE.

The protein belongs to the GRXCR2 family. In terms of assembly, interacts with TPRN; the interaction restricts TPRN to the stereocilum basal region. In terms of tissue distribution, expressed in sensory hair cells in the cochlea and vestibular organ.

The protein resides in the cell projection. It localises to the stereocilium. Required for hearing. Plays a role in maintaining cochlear stereocilia bundles that are involved in sound detection. Ensures the restriction of TPRN to the basal region of stereocilia in hair cells. The sequence is that of Glutaredoxin domain-containing cysteine-rich protein 2 (Grxcr2) from Mus musculus (Mouse).